A 375-amino-acid chain; its full sequence is WAT1-related protein At1g70260 (375 aa).

A run of 10 helical transmembrane segments spans residues 10–30 (LVPFVAMAIMEACTIALTIMA), 41–61 (FVFVVYTNAFGSILLLPFSFL), 72–92 (IFSWPLLVRVFFLGFTGIFMF), 106–126 (IVVCAMGLQIPSFSFLLSIIL), 143–163 (MGTIVSLSGAFVEELYKGPFI), 191–211 (WFLGCIFLAVAVFSVSLFNVV), 225–245 (VASFYSIVGTIQCLLFSLFME), 259–278 (LYLIIATGTFGSVIRTSVHV), 289–309 (VPLFKPFGIFWATLFGTSFFV), and 312–332 (LHYGSVLGAAIAGVGYFTVSW). The EamA domain maps to 25-134 (ALTIMAKTAL…ILGRSKLDWR (110 aa)). The segment at 337–356 (ESEEKQSSNEERKSIKTIHH) is disordered.

It belongs to the drug/metabolite transporter (DMT) superfamily. Plant drug/metabolite exporter (P-DME) (TC 2.A.7.4) family.

The protein localises to the membrane. In Arabidopsis thaliana (Mouse-ear cress), this protein is WAT1-related protein At1g70260.